Here is a 194-residue protein sequence, read N- to C-terminus: Metalloproteinase inhibitor 2 (194 aa).

Cys-1 serves as a coordination point for Zn(2+). 2 involved in metalloproteinase-binding regions span residues Cys-1–Ser-4 and Ser-69–Ala-70. Disulfide bonds link Cys-1–Cys-72, Cys-3–Cys-101, Cys-13–Cys-126, Cys-128–Cys-175, Cys-133–Cys-138, and Cys-146–Cys-167. The NTR domain maps to Cys-1 to Cys-126.

This sequence belongs to the protease inhibitor I35 (TIMP) family. Interacts (via the C-terminal) with MMP2 (via the C-terminal PEX domain); the interaction inhibits the MMP2 activity. In terms of processing, the activity of TIMP2 is dependent on the presence of disulfide bonds.

Its subcellular location is the secreted. Functionally, complexes with metalloproteinases (such as collagenases) and irreversibly inactivates them by binding to their catalytic zinc cofactor. The sequence is that of Metalloproteinase inhibitor 2 (TIMP2) from Oryctolagus cuniculus (Rabbit).